The sequence spans 495 residues: Histidine--tRNA ligase (495 aa).

Polar residues predominate over residues 1 to 10 (MTTDSEQPNT). The segment at 1-24 (MTTDSEQPNTDFRPEARAPRGFAD) is disordered. A compositionally biased stretch (basic and acidic residues) spans 12–24 (FRPEARAPRGFAD).

It belongs to the class-II aminoacyl-tRNA synthetase family. As to quaternary structure, homodimer.

It is found in the cytoplasm. The catalysed reaction is tRNA(His) + L-histidine + ATP = L-histidyl-tRNA(His) + AMP + diphosphate + H(+). The sequence is that of Histidine--tRNA ligase (hisS) from Caulobacter vibrioides (strain ATCC 19089 / CIP 103742 / CB 15) (Caulobacter crescentus).